We begin with the raw amino-acid sequence, 902 residues long: Cytosolic 10-formyltetrahydrofolate dehydrogenase (902 aa).

Residues 1-310 (MKIAVIGQSL…PASQYYKTAD (310 aa)) are hydrolase domain. 88–90 (QFI) contacts (6R)-10-formyltetrahydrofolate. Residue His-106 is the Proton donor of the active site. Asp-142 serves as a coordination point for (6R)-10-formyltetrahydrofolate. The Carrier domain occupies 318–395 (DEEKKFSEEI…EFIQMVVRRL (78 aa)). O-(pantetheine 4'-phosphoryl)serine is present on Ser-354. Residues 417 to 902 (TVKIPHQLFI…LKTKAVTIEY (486 aa)) form an aldehyde dehydrogenase domain region. NADP(+)-binding positions include 571–573 (IPW), 597–600 (KPAQ), 630–635 (GSLIGQ), 650–651 (GS), and 673–674 (EL). Glu-673 serves as the catalytic Proton acceptor. The active-site Proton donor is the Cys-707. NADP(+)-binding positions include Lys-757 and 804–806 (ESF).

The protein in the N-terminal section; belongs to the GART family. This sequence in the C-terminal section; belongs to the aldehyde dehydrogenase family. ALDH1L subfamily. As to quaternary structure, homotetramer. In terms of processing, phosphopantetheinylation at Ser-354 by AASDHPPT is required for the formyltetrahydrofolate dehydrogenase activity.

It localises to the cytoplasm. It is found in the cytosol. The enzyme catalyses (6R)-10-formyltetrahydrofolate + NADP(+) + H2O = (6S)-5,6,7,8-tetrahydrofolate + CO2 + NADPH + H(+). Its function is as follows. Cytosolic 10-formyltetrahydrofolate dehydrogenase that catalyzes the NADP(+)-dependent conversion of 10-formyltetrahydrofolate to tetrahydrofolate and carbon dioxide. May also have an NADP(+)-dependent aldehyde dehydrogenase activity towards formaldehyde, acetaldehyde, propionaldehyde, and benzaldehyde. Regulates reduced folate pools as well as glycine metabolism. The sequence is that of Cytosolic 10-formyltetrahydrofolate dehydrogenase (aldh1l1) from Xenopus tropicalis (Western clawed frog).